Consider the following 64-residue polypeptide: Large ribosomal subunit protein bL35 (64 aa).

Positions 18 to 39 (GSGLVKHYPSNKHHKNTHKKEN) are disordered. Over residues 26 to 39 (PSNKHHKNTHKKEN) the composition is skewed to basic residues.

It belongs to the bacterial ribosomal protein bL35 family.

The chain is Large ribosomal subunit protein bL35 from Symbiobacterium thermophilum (strain DSM 24528 / JCM 14929 / IAM 14863 / T).